Reading from the N-terminus, the 542-residue chain is CTP synthase (542 aa).

Residues 1-265 (MARYVFITGG…DDEVLAAFGI (265 aa)) are amidoligase domain. Residue S13 participates in CTP binding. Residue S13 coordinates UTP. ATP is bound by residues 14 to 19 (SLGKGI) and D71. D71 and E139 together coordinate Mg(2+). CTP-binding positions include 146-148 (DIE), 186-191 (KTKPTQ), and K222. UTP-binding positions include 186-191 (KTKPTQ) and K222. Positions 291–541 (TIAIVGKYTG…IEAATEQSRL (251 aa)) constitute a Glutamine amidotransferase type-1 domain. Position 353 (G353) interacts with L-glutamine. The active-site Nucleophile; for glutamine hydrolysis is C380. L-glutamine contacts are provided by residues 381 to 384 (FGMQ), E404, and R469. Residues H514 and E516 contribute to the active site.

This sequence belongs to the CTP synthase family. In terms of assembly, homotetramer.

It carries out the reaction UTP + L-glutamine + ATP + H2O = CTP + L-glutamate + ADP + phosphate + 2 H(+). It catalyses the reaction L-glutamine + H2O = L-glutamate + NH4(+). The enzyme catalyses UTP + NH4(+) + ATP = CTP + ADP + phosphate + 2 H(+). The protein operates within pyrimidine metabolism; CTP biosynthesis via de novo pathway; CTP from UDP: step 2/2. With respect to regulation, allosterically activated by GTP, when glutamine is the substrate; GTP has no effect on the reaction when ammonia is the substrate. The allosteric effector GTP functions by stabilizing the protein conformation that binds the tetrahedral intermediate(s) formed during glutamine hydrolysis. Inhibited by the product CTP, via allosteric rather than competitive inhibition. Catalyzes the ATP-dependent amination of UTP to CTP with either L-glutamine or ammonia as the source of nitrogen. Regulates intracellular CTP levels through interactions with the four ribonucleotide triphosphates. In Rhizobium etli (strain CIAT 652), this protein is CTP synthase.